The chain runs to 89 residues: Small ribosomal subunit protein uS17 (89 aa).

Belongs to the universal ribosomal protein uS17 family. Part of the 30S ribosomal subunit.

Functionally, one of the primary rRNA binding proteins, it binds specifically to the 5'-end of 16S ribosomal RNA. The polypeptide is Small ribosomal subunit protein uS17 (Chlorobium chlorochromatii (strain CaD3)).